Consider the following 437-residue polypeptide: Membrane protein NfeD1b (437 aa).

5 helical membrane-spanning segments follow: residues 2 to 22, 231 to 251, 253 to 273, 288 to 308, and 316 to 336; these read LQIK…LLGV, WLTN…GLTV, LFSP…LLFF, LLFI…GGII, and IIAS…SLLI.

The protein belongs to the NfeD family.

The protein localises to the cell membrane. In Bacillus subtilis (strain 168), this protein is Membrane protein NfeD1b.